Here is a 142-residue protein sequence, read N- to C-terminus: Large ribosomal subunit protein uL13 (142 aa).

This sequence belongs to the universal ribosomal protein uL13 family. Part of the 50S ribosomal subunit.

Its function is as follows. This protein is one of the early assembly proteins of the 50S ribosomal subunit, although it is not seen to bind rRNA by itself. It is important during the early stages of 50S assembly. The polypeptide is Large ribosomal subunit protein uL13 (Vesicomyosocius okutanii subsp. Calyptogena okutanii (strain HA)).